The following is a 345-amino-acid chain: Selenide, water dikinase (345 aa).

C15 is a catalytic residue. Residues K18 and 46–48 each bind ATP; that span reads SKD. Mg(2+) is bound at residue D49. Residues D66, D89, and 137–139 contribute to the ATP site; that span reads GHS. A Mg(2+)-binding site is contributed by D89. D225 provides a ligand contact to Mg(2+).

Belongs to the selenophosphate synthase 1 family. Class I subfamily. Homodimer. It depends on Mg(2+) as a cofactor.

It carries out the reaction hydrogenselenide + ATP + H2O = selenophosphate + AMP + phosphate + 2 H(+). In terms of biological role, synthesizes selenophosphate from selenide and ATP. The sequence is that of Selenide, water dikinase from Aeromonas salmonicida (strain A449).